Here is a 340-residue protein sequence, read N- to C-terminus: Nicotianamine synthase 9 (340 aa).

Belongs to the nicotianamine synthase (NAS)-like family. In terms of assembly, homotrimer.

It carries out the reaction 3 S-adenosyl-L-methionine = nicotianamine + 3 S-methyl-5'-thioadenosine + 3 H(+). Synthesizes nicotianamine, a polyamine that is the first intermediate in the synthesis of the phytosiderophores of the mugineic acid type found in gramineae which serves as a sensor for the physiological iron status within the plant, and/or might be involved in the transport of iron. The sequence is that of Nicotianamine synthase 9 (NAS9) from Hordeum vulgare (Barley).